The chain runs to 641 residues: Probable serine protease FE772_23065 (641 aa).

A helical transmembrane segment spans residues 532–552 (WVELIAILAAAGWIRVMLIGL).

It belongs to the peptidase S1 family.

It localises to the cell inner membrane. Possibly a dedicated protease for substrate gasdermin bGSDM; cleaves the bGSDM precursor, releasing the pore-forming moiety, which integrates into the membrane and triggers cell death. Involved in defense against bacteriophages. When this probable 4 gene operon (bGSDM-FE772_23060-FE772_23065-FE772_23070) is inserted into E.coli it provides nearly 100-fold protection against phages T5 and T6 and about 8-fold against phage T4. The operon without bGSDM no longer protects against phage. The chain is Probable serine protease FE772_23065 from Lysobacter enzymogenes.